The primary structure comprises 324 residues: Elongation factor P--(R)-beta-lysine ligase (324 aa).

75 to 77 (SPE) provides a ligand contact to substrate. Residues 99 to 101 (RNK) and Asn108 each bind ATP. A substrate-binding site is contributed by Tyr117. 243–244 (EL) is a binding site for ATP. Residue Glu250 coordinates substrate. Gly299 is a binding site for ATP.

Belongs to the class-II aminoacyl-tRNA synthetase family. EpmA subfamily. In terms of assembly, homodimer.

The enzyme catalyses D-beta-lysine + L-lysyl-[protein] + ATP = N(6)-((3R)-3,6-diaminohexanoyl)-L-lysyl-[protein] + AMP + diphosphate + H(+). Its function is as follows. With EpmB is involved in the beta-lysylation step of the post-translational modification of translation elongation factor P (EF-P). Catalyzes the ATP-dependent activation of (R)-beta-lysine produced by EpmB, forming a lysyl-adenylate, from which the beta-lysyl moiety is then transferred to the epsilon-amino group of a conserved specific lysine residue in EF-P. This is Elongation factor P--(R)-beta-lysine ligase from Buchnera aphidicola subsp. Acyrthosiphon pisum (strain 5A).